A 496-amino-acid chain; its full sequence is MDAPTLSELEGLRYSELQKLAKTAGLKANLKADKLLKALKVHFYPESKDESPDSDGCTSLTDTDELNSSQEKEEPVSVSFVTHRRGRGRKPLQNQAIPKDEFLSDSAGVGSESLASEIDNTQDKDCLESKKKEVSLPILDNKHKKRSRSQDTSKQNNSETTEKRQKKASNVSSIPSAGKIPRYVGRLSKPGSKPSTPNFKKLHEAHFKKMESIDKFMERKQKRLDAVSSSIQEVKMLTKKSNLLKLVEKTPVSDIKKPVKSRLSLLSPLPRTTGASPSRTPMSRRRSGRFSTANKSILVDRSGFKPSVLSSSKMNVRFSEATKDNEYKRSLIKTPARKSSSFLPITPKSEPRQTLSSIKKTDLLTSPEKAKKPDHNTTIQPSPAITESPCQQNKANTPFKFMAQNTETPNTNKKGSFDLQASLSRPLGYQPHRGKLKPWGESKENKSGSNSNVSVLKNNFKQPQLQTREERRKQHELDRKGKRDQALGTRRGVPVK.

Disordered stretches follow at residues 44–206, 250–294, and 338–496; these read YPES…HEAH, TPVS…STAN, and KSSS…VPVK. The span at 56 to 69 shows a compositional bias: polar residues; that stretch reads GCTSLTDTDELNSS. Residues 121 to 134 are compositionally biased toward basic and acidic residues; that stretch reads TQDKDCLESKKKEV. Positions 150-159 are enriched in polar residues; the sequence is QDTSKQNNSE. Low complexity predominate over residues 261 to 281; that stretch reads SRLSLLSPLPRTTGASPSRTP. Polar residues-rich tracts occupy residues 376–396 and 403–423; these read NTTI…NKAN and AQNT…QASL. The span at 447-459 shows a compositional bias: low complexity; the sequence is SGSNSNVSVLKNN. A compositionally biased stretch (basic and acidic residues) spans 467-485; sequence TREERRKQHELDRKGKRDQ.

It belongs to the NUSAP family. In terms of assembly, interacts with DNA, microtubules, ipo7, kpna2 and kpnb1. Microtubule stabilization is inhibited by ipo7 and kpna2, while microtubule bundling is inhibited by kpnb1. Active GTP-bound ran causes dissociation of ipo7 and kpnb1.

It localises to the cytoplasm. The protein localises to the nucleus. The protein resides in the cytoskeleton. Its subcellular location is the spindle. Its function is as follows. Microtubule-associated protein with the capacity to bundle and stabilize microtubules. May associate with chromosomes and promote the organization of meiotic or mitotic spindle microtubules around them. The polypeptide is Nucleolar and spindle-associated protein 1-B (nusap1-b) (Xenopus laevis (African clawed frog)).